A 506-amino-acid polypeptide reads, in one-letter code: Histidine ammonia-lyase (506 aa).

A cross-link (5-imidazolinone (Ala-Gly)) is located at residues Ala-143–Gly-145. At Ser-144 the chain carries 2,3-didehydroalanine (Ser).

This sequence belongs to the PAL/histidase family. Post-translationally, contains an active site 4-methylidene-imidazol-5-one (MIO), which is formed autocatalytically by cyclization and dehydration of residues Ala-Ser-Gly.

It localises to the cytoplasm. The catalysed reaction is L-histidine = trans-urocanate + NH4(+). Its pathway is amino-acid degradation; L-histidine degradation into L-glutamate; N-formimidoyl-L-glutamate from L-histidine: step 1/3. This is Histidine ammonia-lyase from Salmonella gallinarum (strain 287/91 / NCTC 13346).